The following is a 473-amino-acid chain: Ribulose bisphosphate carboxylase large chain (473 aa).

Lys-8 is subject to N6,N6,N6-trimethyllysine. Residues Asn-117 and Thr-167 each contribute to the substrate site. The active-site Proton acceptor is the Lys-169. Lys-171 lines the substrate pocket. Positions 195, 197, and 198 each coordinate Mg(2+). An N6-carboxylysine modification is found at Lys-195. His-288 acts as the Proton acceptor in catalysis. Substrate contacts are provided by Arg-289, His-321, and Ser-373.

The protein belongs to the RuBisCO large chain family. Type I subfamily. In terms of assembly, heterohexadecamer of 8 large chains and 8 small chains; disulfide-linked. The disulfide link is formed within the large subunit homodimers. The cofactor is Mg(2+). In terms of processing, the disulfide bond which can form in the large chain dimeric partners within the hexadecamer appears to be associated with oxidative stress and protein turnover.

Its subcellular location is the plastid. It localises to the chloroplast. It catalyses the reaction 2 (2R)-3-phosphoglycerate + 2 H(+) = D-ribulose 1,5-bisphosphate + CO2 + H2O. The catalysed reaction is D-ribulose 1,5-bisphosphate + O2 = 2-phosphoglycolate + (2R)-3-phosphoglycerate + 2 H(+). Functionally, ruBisCO catalyzes two reactions: the carboxylation of D-ribulose 1,5-bisphosphate, the primary event in carbon dioxide fixation, as well as the oxidative fragmentation of the pentose substrate in the photorespiration process. Both reactions occur simultaneously and in competition at the same active site. This is Ribulose bisphosphate carboxylase large chain from Amorphophallus titanum (Titan arum).